Reading from the N-terminus, the 245-residue chain is DNA repair protein RecO (245 aa).

Belongs to the RecO family.

Its function is as follows. Involved in DNA repair and RecF pathway recombination. This chain is DNA repair protein RecO, found in Erwinia tasmaniensis (strain DSM 17950 / CFBP 7177 / CIP 109463 / NCPPB 4357 / Et1/99).